The chain runs to 82 residues: Putative membrane protein insertion efficiency factor (82 aa).

The protein belongs to the UPF0161 family.

It is found in the cell inner membrane. Functionally, could be involved in insertion of integral membrane proteins into the membrane. The sequence is that of Putative membrane protein insertion efficiency factor from Rickettsia massiliae (strain Mtu5).